The chain runs to 152 residues: Methylglyoxal synthase (152 aa).

The 147-residue stretch at 6-152 (RKISARKSIA…YDGYLAERLA (147 aa)) folds into the MGS-like domain. Residues H19, K23, 45–48 (TGTT), and 65–66 (SG) contribute to the substrate site. Residue D71 is the Proton donor/acceptor of the active site. H98 contacts substrate.

The protein belongs to the methylglyoxal synthase family.

The enzyme catalyses dihydroxyacetone phosphate = methylglyoxal + phosphate. Catalyzes the formation of methylglyoxal from dihydroxyacetone phosphate. This chain is Methylglyoxal synthase, found in Actinobacillus pleuropneumoniae serotype 3 (strain JL03).